A 208-amino-acid chain; its full sequence is Large ribosomal subunit protein bL25 (208 aa).

The protein belongs to the bacterial ribosomal protein bL25 family. CTC subfamily. In terms of assembly, part of the 50S ribosomal subunit; part of the 5S rRNA/L5/L18/L25 subcomplex. Contacts the 5S rRNA. Binds to the 5S rRNA independently of L5 and L18.

Functionally, this is one of the proteins that binds to the 5S RNA in the ribosome where it forms part of the central protuberance. This Burkholderia pseudomallei (strain K96243) protein is Large ribosomal subunit protein bL25.